We begin with the raw amino-acid sequence, 233 residues long: Probable 2-phosphosulfolactate phosphatase (233 aa).

The protein belongs to the ComB family. Mg(2+) serves as cofactor.

The enzyme catalyses (2R)-O-phospho-3-sulfolactate + H2O = (2R)-3-sulfolactate + phosphate. In Clostridium tetani (strain Massachusetts / E88), this protein is Probable 2-phosphosulfolactate phosphatase.